The sequence spans 179 residues: ATP-dependent protease subunit HslV (179 aa).

The active site involves Thr5. Na(+) contacts are provided by Cys164 and Thr167.

It belongs to the peptidase T1B family. HslV subfamily. A double ring-shaped homohexamer of HslV is capped on each side by a ring-shaped HslU homohexamer. The assembly of the HslU/HslV complex is dependent on binding of ATP.

It is found in the cytoplasm. It catalyses the reaction ATP-dependent cleavage of peptide bonds with broad specificity.. With respect to regulation, allosterically activated by HslU binding. Protease subunit of a proteasome-like degradation complex believed to be a general protein degrading machinery. This Carboxydothermus hydrogenoformans (strain ATCC BAA-161 / DSM 6008 / Z-2901) protein is ATP-dependent protease subunit HslV.